Consider the following 219-residue polypeptide: Ribosome maturation factor RimP (219 aa).

The disordered stretch occupies residues 195-219 (EGRIPGDDLGAEPEDAASTETQEKK).

Belongs to the RimP family.

It localises to the cytoplasm. Its function is as follows. Required for maturation of 30S ribosomal subunits. The protein is Ribosome maturation factor RimP of Brucella melitensis biotype 2 (strain ATCC 23457).